The primary structure comprises 185 residues: ADP-ribosylation factor (185 aa).

A lipid anchor (N-myristoyl glycine) is attached at glycine 2. Residues 27–34, 70–74, and 129–132 contribute to the GTP site; these read GLDAAGKT, DVGGQ, and NKQD.

This sequence belongs to the small GTPase superfamily. Arf family.

The protein resides in the golgi apparatus. Functionally, GTP-binding protein involved in protein trafficking; may modulate vesicle budding and uncoating within the Golgi apparatus. This chain is ADP-ribosylation factor, found in Neurospora crassa (strain ATCC 24698 / 74-OR23-1A / CBS 708.71 / DSM 1257 / FGSC 987).